The sequence spans 467 residues: ATP synthase subunit beta (467 aa).

150–157 (GGAGVGKT) lines the ATP pocket.

It belongs to the ATPase alpha/beta chains family. In terms of assembly, F-type ATPases have 2 components, CF(1) - the catalytic core - and CF(0) - the membrane proton channel. CF(1) has five subunits: alpha(3), beta(3), gamma(1), delta(1), epsilon(1). CF(0) has three main subunits: a(1), b(2) and c(9-12). The alpha and beta chains form an alternating ring which encloses part of the gamma chain. CF(1) is attached to CF(0) by a central stalk formed by the gamma and epsilon chains, while a peripheral stalk is formed by the delta and b chains.

It is found in the cell inner membrane. The enzyme catalyses ATP + H2O + 4 H(+)(in) = ADP + phosphate + 5 H(+)(out). Produces ATP from ADP in the presence of a proton gradient across the membrane. The catalytic sites are hosted primarily by the beta subunits. This Vibrio vulnificus (strain YJ016) protein is ATP synthase subunit beta.